The primary structure comprises 264 residues: 5'-nucleotidase SurE (264 aa).

Residues Asp-12, Asp-13, Ser-43, and Asn-98 each coordinate a divalent metal cation.

It belongs to the SurE nucleotidase family. It depends on a divalent metal cation as a cofactor.

It localises to the cytoplasm. The catalysed reaction is a ribonucleoside 5'-phosphate + H2O = a ribonucleoside + phosphate. Nucleotidase that shows phosphatase activity on nucleoside 5'-monophosphates. This is 5'-nucleotidase SurE from Sulfurovum sp. (strain NBC37-1).